The chain runs to 128 residues: uncharacterized protein (128 aa).

One can recognise an HTH hxlR-type domain in the interval 18–116; it reads CPVETTLDII…WGEKYKDRID (99 aa).

This is an uncharacterized protein from Bacillus subtilis (strain 168).